Reading from the N-terminus, the 69-residue chain is Omega-oxotoxin-Ol1a (69 aa).

The Oxytoxin-type inhibitor cystine knot (ICK) domain occupies 1–68 (DWECLPLHSS…GKINTCDKYK (68 aa)). Cystine bridges form between C4/C18, C11/C23, C15/C64, C17/C52, and C25/C50. N69 is modified (asparagine amide).

It belongs to the spiderine family. Spiderine subfamily. In terms of tissue distribution, expressed by the venom gland.

The protein localises to the secreted. In terms of biological role, weak blocker of vertebrate P/Q-, N- and L-type voltage-gated calcium channels (Cav1 and Cav2). Is both paralytic and lethal when injected into lepidopteran larvae. Is not toxic to mice. This is Omega-oxotoxin-Ol1a from Oxyopes lineatus (Lynx spider).